The sequence spans 459 residues: Elongation factor 1-alpha (459 aa).

N,N,N-trimethylglycine is present on Gly2. Position 3 is an N6,N6-dimethyllysine; alternate (Lys3). Lys3 is modified (N6-methyllysine; alternate). The 236-residue stretch at 5–240 folds into the tr-type G domain; it reads KLHVNVVVIG…DAIEPPTRPT (236 aa). The G1 stretch occupies residues 14-21; sequence GHVDSGKS. 14-21 serves as a coordination point for GTP; sequence GHVDSGKS. An N6-methyllysine modification is found at Lys30. The segment at 70 to 74 is G2; that stretch reads GITID. Lys79 carries the post-translational modification N6,N6,N6-trimethyllysine. The segment at 91–94 is G3; it reads DAPG. Residues 91–95 and 153–156 contribute to the GTP site; these read DAPGH and NKMD. Positions 153–156 are G4; the sequence is NKMD. Residues 192–194 are G5; that stretch reads SGW. Position 316 is an N6,N6-dimethyllysine; alternate (Lys316). N6-methyllysine; alternate is present on Lys316. Position 390 is an N6-methyllysine (Lys390).

Belongs to the TRAFAC class translation factor GTPase superfamily. Classic translation factor GTPase family. EF-Tu/EF-1A subfamily.

It is found in the cytoplasm. This protein promotes the GTP-dependent binding of aminoacyl-tRNA to the A-site of ribosomes during protein biosynthesis. This Cryptococcus neoformans var. neoformans serotype D (strain B-3501A) (Filobasidiella neoformans) protein is Elongation factor 1-alpha (TEF1).